Here is a 271-residue protein sequence, read N- to C-terminus: Mediator of RNA polymerase II transcription subunit 18 (271 aa).

The interval 89 to 119 (FGGNPSSSGDPDVSMSGLEEKPSSSSSSYSY) is disordered.

The protein belongs to the Mediator complex subunit 18 family. Component of the Mediator complex.

The protein resides in the nucleus. In terms of biological role, component of the Mediator complex, a coactivator involved in the regulated transcription of nearly all RNA polymerase II-dependent genes. Mediator functions as a bridge to convey information from gene-specific regulatory proteins to the basal RNA polymerase II transcription machinery. Mediator is recruited to promoters by direct interactions with regulatory proteins and serves as a scaffold for the assembly of a functional preinitiation complex with RNA polymerase II and the general transcription factors. This is Mediator of RNA polymerase II transcription subunit 18 (srb5) from Aspergillus niger (strain ATCC MYA-4892 / CBS 513.88 / FGSC A1513).